A 1581-amino-acid chain; its full sequence is Mediator of RNA polymerase II transcription subunit 1 (1581 aa).

Residues 1–670 form an interaction with the Mediator complex and THRA region; the sequence is MKAQGETEES…YGSSPLERQN (670 aa). The interval 16-590 is interaction with ESR1; it reads MSSLLERLHA…SIKDRHESVG (575 aa). 2 interaction with the Mediator complex regions span residues 108 to 212 and 215 to 390; these read FYVE…GYLT and SGGH…SLQG. The interaction with THRA stretch occupies residues 405–644; sequence PLILNLIRHQ…MAGNTKNHPM (240 aa). The interaction with VDR stretch occupies residues 542–789; that stretch reads PASSPGYGMT…TDILSDIAEE (248 aa). Position 588 is a phosphoserine (Ser-588). The short motif at 604-608 is the LXXLL motif 1 element; the sequence is LTSLL. 4 disordered regions span residues 609–705, 792–820, 874–893, and 948–1566; these read QITG…HQTE, KLPS…QSTL, SQSG…GDND, and EHHS…DFMI. Residues 622–632 are compositionally biased toward pro residues; sequence PTPPHHTPPPV. Positions 622–701 are interaction with PPARGC1A and THRA; sequence PTPPHHTPPP…SSRLPPEKPK (80 aa). Residues 645–649 carry the LXXLL motif 2 motif; sequence LMNLL. Polar residues predominate over residues 655-675; the sequence is QDFSTLYGSSPLERQNSSSGS. Residues 656–1066 are interaction with ESR1; that stretch reads DFSTLYGSSP…TPPIPKITIQ (411 aa). Phosphoserine is present on Ser-664. An interaction with GATA1 region spans residues 681 to 715; it reads CSGSNKTKKKKSSRLPPEKPKHQTEDDFQRELFSM. Basic and acidic residues predominate over residues 696–705; the sequence is PPEKPKHQTE. A Phosphoserine modification is found at Ser-795. The residue at position 805 (Thr-805) is a Phosphothreonine. Positions 808-820 are enriched in polar residues; that stretch reads RDSSSSGHSQSTL. The Integrase domain-binding motif (IBM) signature appears at 875 to 902; that stretch reads QSGFGEEYFDESSQSGDNDDFKGFASQA. Ser-887 and Ser-953 each carry phosphoserine. A compositionally biased stretch (basic and acidic residues) spans 963-974; that stretch reads LGKEKTQKRVKE. Residue Thr-1032 is modified to Phosphothreonine; by MAPK1 or MAPK3. Residues 1034–1045 show a composition bias toward low complexity; it reads PTSTGGSKSPGS. A phosphothreonine mark is found at Thr-1051 and Thr-1057. Low complexity-rich tracts occupy residues 1078 to 1094 and 1101 to 1156; these read SSHS…SSGS and SSSS…PGSS. Ser-1156 bears the Phosphoserine mark. Polar residues predominate over residues 1162–1195; sequence GLSSGSSSTKMKPQGKPSSLMNPSLSKPNISPSH. An N6-acetyllysine modification is found at Lys-1177. A Phosphoserine modification is found at Ser-1207. At Thr-1215 the chain carries Phosphothreonine. Composition is skewed to low complexity over residues 1218–1227 and 1234–1293; these read SSKAKSPISS and MSGT…SKGK. Ser-1223 carries the post-translational modification Phosphoserine. The interaction with TP53 stretch occupies residues 1249-1421; sequence LGSSGSLSQK…KPGESSGEGL (173 aa). Ser-1302 is modified (phosphoserine). Residues 1330–1345 are compositionally biased toward polar residues; the sequence is GVSTNSSSHPMSSKHN. The residue at position 1347 (Ser-1347) is a Phosphoserine. Basic and acidic residues predominate over residues 1352–1364; that stretch reads QGKREKSDKDKSK. Phosphoserine occurs at positions 1403 and 1433. Composition is skewed to polar residues over residues 1425-1440 and 1448-1482; these read MASS…SGST and PSHS…SPSS. Thr-1440 carries the phosphothreonine modification. Thr-1457 bears the Phosphothreonine; by MAPK1 or MAPK3 mark. 5 positions are modified to phosphoserine: Ser-1463, Ser-1465, Ser-1479, Ser-1481, and Ser-1482. Residues 1496–1505 show a composition bias toward basic residues; sequence KHKKHKKEKK. Basic and acidic residues predominate over residues 1506-1522; sequence KVKDKDRDRDRDKDRDK. The residue at position 1529 (Lys-1529) is an N6-acetyllysine. Over residues 1533–1552 the composition is skewed to polar residues; the sequence is WSKSPISSDQSLSMTSNTIL.

The protein belongs to the Mediator complex subunit 1 family. As to quaternary structure, component of the Mediator complex, which is composed of MED1, MED4, MED6, MED7, MED8, MED9, MED10, MED11, MED12, MED13, MED13L, MED14, MED15, MED16, MED17, MED18, MED19, MED20, MED21, MED22, MED23, MED24, MED25, MED26, MED27, MED29, MED30, MED31, CCNC, CDK8 and CDC2L6/CDK11. The MED12, MED13, CCNC and CDK8 subunits form a distinct module termed the CDK8 module. Mediator containing the CDK8 module is less active than Mediator lacking this module in supporting transcriptional activation. Individual preparations of the Mediator complex lacking one or more distinct subunits have been variously termed ARC, CRSP, DRIP, PC2, SMCC and TRAP. This subunit specifically interacts with a number of nuclear receptors in a ligand-dependent fashion including AR, ESR1, ESR2, PPARA, PPARG, RORA, RXRA, RXRG, THRA, THRB and VDR. Interacts with CTNNB1, GABPA, GLI3, PPARGC1A and TP53. Interacts with YWHAH. Interacts with CLOCK; this interaction requires the presence of THRAP3. Interacts with GATA1 and CCAR1. Interacts with NR4A3. Interacts (via IBM motif) with PSIP1 (via IBD domain); phosphorylation increases its affinity for PSIP1. Interacts with USP22. Post-translationally, phosphorylated by MAPK1 or MAPK3 during G2/M phase which may enhance protein stability and promote entry into the nucleolus. Phosphorylation increases its interaction with PSIP1. Ubiquitously expressed.

It localises to the nucleus. Its function is as follows. Component of the Mediator complex, a coactivator involved in the regulated transcription of nearly all RNA polymerase II-dependent genes. Mediator functions as a bridge to convey information from gene-specific regulatory proteins to the basal RNA polymerase II transcription machinery. Mediator is recruited to promoters by direct interactions with regulatory proteins and serves as a scaffold for the assembly of a functional preinitiation complex with RNA polymerase II and the general transcription factors. Acts as a coactivator for GATA1-mediated transcriptional activation during erythroid differentiation of K562 erythroleukemia cells. The sequence is that of Mediator of RNA polymerase II transcription subunit 1 (MED1) from Homo sapiens (Human).